The primary structure comprises 297 residues: Mitochondrial substrate carrier family protein P (297 aa).

Solcar repeat units lie at residues 12 to 98 (KPSW…IKNH), 104 to 189 (SSSF…LKRI), and 201 to 293 (ISGT…LSNF). Transmembrane regions (helical) follow at residues 15–35 (WVSF…VAPL), 66–86 (GIKG…PYAA), 107–127 (FQIF…TYPL), 165–185 (IQPT…TFEF), 207–227 (LIAG…FDVV), and 262–282 (ILAL…TASI).

It belongs to the mitochondrial carrier (TC 2.A.29) family.

The protein resides in the mitochondrion inner membrane. Its function is as follows. Mitochondrial solute carriers shuttle metabolites, nucleotides, and cofactors through the mitochondrial inner membrane. Required for the accumulation of coenzyme A in the mitochondrial matrix. The sequence is that of Mitochondrial substrate carrier family protein P (mcfP) from Dictyostelium discoideum (Social amoeba).